A 620-amino-acid polypeptide reads, in one-letter code: Guanylate-binding protein 3 (620 aa).

The interval 1–304 is GTPase domain (Globular); that stretch reads MEAPICLVEN…NAINSGTVPC (304 aa). In terms of domain architecture, GB1/RHD3-type G spans 29 to 271; the sequence is AQPLVVVAIV…FCSYIFTNGK (243 aa). GTP is bound by residues 39 to 46, 61 to 63, and 91 to 95; these read GLYRTGKS, LGS, and DTEGL. Coiled-coil stretches lie at residues 375 to 411 and 477 to 582; these read KKLVVTIEERKEEFIRQNEAASIRHCQAELERLSESL and DGER…TRRK.

This sequence belongs to the TRAFAC class dynamin-like GTPase superfamily. GB1/RHD3 GTPase family. GB1 subfamily. As to quaternary structure, heterodimer with other family members, including GBP1, GBP2 and GBP5. Dimerization regulates subcellular location. Brain, lung, heart, spleen, kidney, liver and intestine.

It is found in the cytoplasm. The protein localises to the perinuclear region. The protein resides in the golgi apparatus membrane. The catalysed reaction is GTP + H2O = GDP + phosphate + H(+). In terms of biological role, interferon (IFN)-inducible GTPase that plays important roles in innate immunity against a diverse range of bacterial, viral and protozoan pathogens. Hydrolyzes GTP very efficiently; GDP rather than GMP is the major reaction product. Following infection, recruited to the pathogen-containing vacuoles or vacuole-escaped bacteria and acts as a positive regulator of inflammasome assembly by promoting the release of inflammasome ligands from bacteria. Acts by promoting lysis of pathogen-containing vacuoles, releasing pathogens into the cytosol. Following pathogen release in the cytosol, promotes recruitment of proteins that mediate bacterial cytolysis, such as Gm12250/Irgb10: this liberates ligands that are detected by inflammasomes, such as lipopolysaccharide (LPS) that activates the non-canonical CASP4/CASP11 inflammasome or double-stranded DNA (dsDNA) that activates the AIM2 inflammasome. May play a role in erythroid differentiation. This Mus musculus (Mouse) protein is Guanylate-binding protein 3.